A 122-amino-acid polypeptide reads, in one-letter code: Replication factor A protein 3 (122 aa).

It belongs to the replication factor A protein 3 family. In terms of assembly, component of the heterotrimeric canonical replication protein A complex (RPA). The N-terminus is blocked.

It is found in the nucleus. Functionally, as part of the replication protein A (RPA/RP-A), a single-stranded DNA-binding heterotrimeric complex, may play an essential role in DNA replication, recombination and repair. Binds and stabilizes single-stranded DNA intermediates, preventing complementary DNA reannealing and recruiting different proteins involved in DNA metabolism. Stimulates the activity of a cognate strand exchange protein (SEP1). The polypeptide is Replication factor A protein 3 (RFA3) (Saccharomyces cerevisiae (strain ATCC 204508 / S288c) (Baker's yeast)).